Here is a 349-residue protein sequence, read N- to C-terminus: UDP-3-O-acylglucosamine N-acyltransferase (349 aa).

Residue His248 is the Proton acceptor of the active site.

It belongs to the transferase hexapeptide repeat family. LpxD subfamily. Homotrimer.

It catalyses the reaction a UDP-3-O-[(3R)-3-hydroxyacyl]-alpha-D-glucosamine + a (3R)-hydroxyacyl-[ACP] = a UDP-2-N,3-O-bis[(3R)-3-hydroxyacyl]-alpha-D-glucosamine + holo-[ACP] + H(+). Its pathway is bacterial outer membrane biogenesis; LPS lipid A biosynthesis. Its function is as follows. Catalyzes the N-acylation of UDP-3-O-acylglucosamine using 3-hydroxyacyl-ACP as the acyl donor. Is involved in the biosynthesis of lipid A, a phosphorylated glycolipid that anchors the lipopolysaccharide to the outer membrane of the cell. This Colwellia psychrerythraea (strain 34H / ATCC BAA-681) (Vibrio psychroerythus) protein is UDP-3-O-acylglucosamine N-acyltransferase.